Reading from the N-terminus, the 120-residue chain is Large ribosomal subunit protein bL21 (120 aa).

This sequence belongs to the bacterial ribosomal protein bL21 family. In terms of assembly, part of the 50S ribosomal subunit. Contacts protein L20.

Its function is as follows. This protein binds to 23S rRNA in the presence of protein L20. The protein is Large ribosomal subunit protein bL21 of Roseiflexus castenholzii (strain DSM 13941 / HLO8).